The primary structure comprises 359 residues: Transcription factor MafA (359 aa).

Ser-14 bears the Phosphoserine mark. Lys-32 participates in a covalent cross-link: Glycyl lysine isopeptide (Lys-Gly) (interchain with G-Cter in SUMO2). 2 disordered regions span residues Arg-40–Ala-105 and Gly-172–His-226. Residues Pro-46–Pro-73 show a composition bias toward low complexity. At Ser-49 the chain carries Phosphoserine. A phosphothreonine mark is found at Thr-53 and Thr-57. Phosphoserine is present on residues Ser-61 and Ser-65. Residues Gly-74–Ser-84 are compositionally biased toward gly residues. Positions Gly-181–Ser-209 are enriched in basic residues. Residues Gly-210–Gly-224 are compositionally biased toward gly residues. The interval Arg-260–Arg-285 is basic motif. One can recognise a bZIP domain in the interval Arg-260–Leu-323. Positions Leu-288–Leu-309 are leucine-zipper. Positions Lys-322–Leu-359 are disordered. The segment covering Gly-325 to Gly-336 has biased composition (gly residues). The span at Pro-343–Leu-359 shows a compositional bias: low complexity.

Belongs to the bZIP family. Maf subfamily. As to quaternary structure, forms homodimers. Interacts with NEUROD1 and PDX1. May interact with MAFB, FOS, JUN and PCAF. In terms of processing, ubiquitinated, leading to its degradation by the proteasome. Phosphorylated at tyrosines. Expressed in brain, lung, spleen, pancreas and kidney. In the pancreas, expressed in the insulin-producing beta-cells of the islets of Langerhans (at protein level). Also expressed in the eye.

The protein resides in the nucleus. Functionally, transcriptional factor that activates insulin gene expression. Acts synergistically with NEUROD1/BETA2 and PDX1. Binds the insulin enhancer C1/RIPE3b element. Binds to consensus TRE-type MARE 5'-TGCTGACTCAGCA-3' DNA sequence. This chain is Transcription factor MafA (Mafa), found in Mus musculus (Mouse).